The chain runs to 187 residues: MQDKNNLCWLDMEMTGLNPETDRIIEVAMIITDSDLNVLAQSEVYAVHQSDELLDNMDEWNTATHGRTGLTQRVRESLHTEAEVEQKLLDFMSEWVPGRATPMCGNSIHQDRRFMVKYMPKLENYFHYRNLDVSTLKELAKRWNPSVAKSVVKRGSHKALDDILESIEEMRHYREHFLISAPRAEAQ.

The Exonuclease domain occupies leucine 7–methionine 170. Tyrosine 128 is an active-site residue.

This sequence belongs to the oligoribonuclease family.

The protein resides in the cytoplasm. In terms of biological role, 3'-to-5' exoribonuclease specific for small oligoribonucleotides. In Neisseria meningitidis serogroup C / serotype 2a (strain ATCC 700532 / DSM 15464 / FAM18), this protein is Oligoribonuclease.